A 200-amino-acid polypeptide reads, in one-letter code: RNA-binding protein with multiple splicing 2 (200 aa).

Residues 22 to 99 (RTLFVSGLPV…QTLRLEFAKA (78 aa)) form the RRM domain. Positions 32 to 42 (DIKPRELYLLF) are important for homodimerization.

Homodimer. In terms of tissue distribution, expressed in developing heart.

Its subcellular location is the cytoplasm. The protein localises to the nucleus. The protein resides in the stress granule. Functionally, RNA-binding protein involved in the regulation of smooth muscle cell differentiation and proliferation in the gastrointestinal system. Binds NOG mRNA, the major inhibitor of the bone morphogenetic protein (BMP) pathway. Mediates an increase of NOG mRNA levels, thereby contributing to the negative regulation of BMP signaling pathway and promoting reversible dedifferentiation and proliferation of smooth muscle cells. Acts as a pre-mRNA alternative splicing regulator. Mediates ACTN1 and FLNB alternative splicing. Likely binds to mRNA tandem CAC trinucleotide or CA dinucleotide motifs. This chain is RNA-binding protein with multiple splicing 2, found in Gallus gallus (Chicken).